An 86-amino-acid polypeptide reads, in one-letter code: Cell division topological specificity factor (86 aa).

Belongs to the MinE family.

Prevents the cell division inhibition by proteins MinC and MinD at internal division sites while permitting inhibition at polar sites. This ensures cell division at the proper site by restricting the formation of a division septum at the midpoint of the long axis of the cell. The sequence is that of Cell division topological specificity factor from Shewanella halifaxensis (strain HAW-EB4).